The sequence spans 732 residues: MGRREEMIAKIKELMTQPERIRNMGIAAHIDHGKTTLSDNLLAGAGMISEELAGKQLVLDFDEQEQARGITINAANVSMVHTYEGKEYLINLIDTPGHVDFGGDVTRAMRAIDGAIIVVDAVEGVMPQTETVLRQALREYVKPVLFINKVDRLIKELKLGPNEILNRFAKIITDVNRLIKRYAPEEFKNQWLVKVEDGSVAFGSAYYNWALSVPYMKRTGVTFKDIVELTNAGDLKTLRQKAPLHVVVLDMVVRHLPNPLEAQKYRIPHLWRGDINSDVGQAMINCDPKGKMVMVVTKIILDKHAGEVATGRVWSGTVKTGQEVYLINSKRKARIQQVGIYMGPERVNMEAVQAGNIVAVTGLRDAMAGETVSVEQIEPFEALHYTSEPVVTVAIEAKNVKDLPKLIEALRQLAKEDPTLHVKIDEETGQHLLSGMGELHLEVKLYRLKTEWKLDVDVSPPIVVYRESVTKQSPIVEGKSPNKHNRFYITVEPLPDAIYEAIREGEIPEGRPKDPKAVAKKLAELGLDYEIAKGIVDVYNGNIFLDNTKGIQYLNEVMDLLVDGFHQAMDEGPLAKEPVMKVMVRLHDAKIHEDNVHRGPAQIYPAIRTAIHCAMMKAGPVLYEPYQKVIINIPYEYMGSVSREINQRRGQLIDMRQEGEVMIIISEAPVAEMFGFAGALRGATSGKALWSTEHAGFKRVPNELAVNIIRQIRQRKGLDPNPPKEQDVCPQQ.

Residues 19-260 (ERIRNMGIAA…MVVRHLPNPL (242 aa)) enclose the tr-type G domain. GTP contacts are provided by residues 28-35 (AHIDHGKT), 94-98 (DTPGH), and 148-151 (NKVD). His597 carries the diphthamide modification.

Belongs to the TRAFAC class translation factor GTPase superfamily. Classic translation factor GTPase family. EF-G/EF-2 subfamily.

The protein localises to the cytoplasm. Functionally, catalyzes the GTP-dependent ribosomal translocation step during translation elongation. During this step, the ribosome changes from the pre-translocational (PRE) to the post-translocational (POST) state as the newly formed A-site-bound peptidyl-tRNA and P-site-bound deacylated tRNA move to the P and E sites, respectively. Catalyzes the coordinated movement of the two tRNA molecules, the mRNA and conformational changes in the ribosome. This chain is Elongation factor 2, found in Thermococcus onnurineus (strain NA1).